Here is a 255-residue protein sequence, read N- to C-terminus: Imidazole glycerol phosphate synthase subunit HisF (255 aa).

Catalysis depends on residues aspartate 11 and aspartate 130.

It belongs to the HisA/HisF family. As to quaternary structure, heterodimer of HisH and HisF.

It localises to the cytoplasm. It catalyses the reaction 5-[(5-phospho-1-deoxy-D-ribulos-1-ylimino)methylamino]-1-(5-phospho-beta-D-ribosyl)imidazole-4-carboxamide + L-glutamine = D-erythro-1-(imidazol-4-yl)glycerol 3-phosphate + 5-amino-1-(5-phospho-beta-D-ribosyl)imidazole-4-carboxamide + L-glutamate + H(+). The protein operates within amino-acid biosynthesis; L-histidine biosynthesis; L-histidine from 5-phospho-alpha-D-ribose 1-diphosphate: step 5/9. Its function is as follows. IGPS catalyzes the conversion of PRFAR and glutamine to IGP, AICAR and glutamate. The HisF subunit catalyzes the cyclization activity that produces IGP and AICAR from PRFAR using the ammonia provided by the HisH subunit. The polypeptide is Imidazole glycerol phosphate synthase subunit HisF (Rhodopseudomonas palustris (strain HaA2)).